The chain runs to 841 residues: Neuronal tyrosine-phosphorylated phosphoinositide-3-kinase adapter 1 (841 aa).

Disordered stretches follow at residues 1-45, 64-448, 655-679, 745-769, and 812-833; these read MNLL…PGVR, PASQ…PAAL, RAWN…TSGI, RPCS…PLPP, and LPSW…RRQH. Positions 8–25 are enriched in basic and acidic residues; sequence TKLEWRQHKEEEAKRSSS. Residues 26-39 are compositionally biased toward low complexity; it reads KEVAPAGSAGPAAG. The involved in CYFIP1- and NCKAP1-binding stretch occupies residues 76–186; that stretch reads SAMAPRSLSC…DESCPPGPSP (111 aa). Residues 94–103 show a composition bias toward gly residues; sequence VGGGPGGASG. Residues 114–123 show a composition bias toward basic residues; it reads PPAKPRRHPS. The span at 167–176 shows a compositional bias: polar residues; it reads SPNTQLSVSF. Residues 224–243 are compositionally biased toward gly residues; that stretch reads FRGGGRSGGGLAGPPLGGGG. Acidic residues predominate over residues 252-261; that stretch reads SDSEESEAIY. The segment covering 279–295 has biased composition (pro residues); that stretch reads GPPPLTATSPPQQPHAL. Over residues 759 to 769 the composition is skewed to pro residues; that stretch reads PALPLPLPLPP.

The protein belongs to the NYAP family. In terms of assembly, interacts with ACOT9, ARHGAP26 and PIK3R2. Interacts with components of the WAVE1 complex, CYFIP1 and NCKAP1; this interaction mediates PI3K-WAVE1 association and actin cytoskeleton remodeling. Post-translationally, phosphorylated on tyrosine residues by FYN upon stimulation with CNTN5.

Its function is as follows. Activates PI3K and concomitantly recruits the WAVE1 complex to the close vicinity of PI3K and regulates neuronal morphogenesis. The sequence is that of Neuronal tyrosine-phosphorylated phosphoinositide-3-kinase adapter 1 (NYAP1) from Homo sapiens (Human).